A 473-amino-acid chain; its full sequence is Zinc finger and SCAN domain-containing protein 21 (473 aa).

Lys-27 is covalently cross-linked (Glycyl lysine isopeptide (Lys-Gly) (interchain with G-Cter in SUMO2)). Residues 45-127 (RQRFRQFGYH…TLLEDLEREL (83 aa)) enclose the SCAN box domain. The interval 127 to 169 (LDEPGHQVSTPPNEQKPVWEKISSSGTAKESPSSMQPQPLETS) is disordered. A compositionally biased stretch (polar residues) spans 148-167 (ISSSGTAKESPSSMQPQPLE). Glycyl lysine isopeptide (Lys-Gly) (interchain with G-Cter in SUMO2) cross-links involve residues Lys-221 and Lys-232. Residues 244–272 (LENEKGTKPPLQEAGSKKGRESVPTKPTP) are disordered. Residues 258–272 (GSKKGRESVPTKPTP) show a composition bias toward basic and acidic residues. C2H2-type zinc fingers lie at residues 277–299 (YICAECGKAFSNSSNLTKHRRTH), 305–327 (YVCTKCGKAFSHSSNLTLHYRTH), 333–354 (YDCKCGKAFGQSSDLLKHQRMH), 360–382 (YQCKDCGKAFSGKGSLIRHYRIH), 388–410 (YQCNECGKSFSQHAGLSSHQRLH), 416–438 (YKCKECGKAFNHSSNFNKHHRIH), and 444–466 (YWCHHCGKTFCSKSNLSKHQRVH). Residue Lys-349 forms a Glycyl lysine isopeptide (Lys-Gly) (interchain with G-Cter in SUMO2) linkage.

It belongs to the krueppel C2H2-type zinc-finger protein family.

The protein resides in the nucleus. In terms of biological role, strong transcriptional activator. Plays an important role in spermatogenesis; essential for the progression of meiotic prophase I in spermatocytes. The sequence is that of Zinc finger and SCAN domain-containing protein 21 (ZSCAN21) from Homo sapiens (Human).